Reading from the N-terminus, the 139-residue chain is D-ribose pyranase (139 aa).

H20 (proton donor) is an active-site residue. Substrate contacts are provided by residues D28, H106, and 128 to 130 (YAN).

Belongs to the RbsD / FucU family. RbsD subfamily. As to quaternary structure, homodecamer.

It is found in the cytoplasm. It catalyses the reaction beta-D-ribopyranose = beta-D-ribofuranose. It functions in the pathway carbohydrate metabolism; D-ribose degradation; D-ribose 5-phosphate from beta-D-ribopyranose: step 1/2. Functionally, catalyzes the interconversion of beta-pyran and beta-furan forms of D-ribose. This is D-ribose pyranase from Enterobacter sp. (strain 638).